We begin with the raw amino-acid sequence, 123 residues long: ATP synthase epsilon chain (123 aa).

Belongs to the ATPase epsilon chain family. As to quaternary structure, F-type ATPases have 2 components, CF(1) - the catalytic core - and CF(0) - the membrane proton channel. CF(1) has five subunits: alpha(3), beta(3), gamma(1), delta(1), epsilon(1). CF(0) has three main subunits: a, b and c.

It is found in the cell inner membrane. Its function is as follows. Produces ATP from ADP in the presence of a proton gradient across the membrane. This Helicobacter pylori (strain HPAG1) protein is ATP synthase epsilon chain.